A 551-amino-acid chain; its full sequence is Methionine--tRNA ligase (551 aa).

A 'HIGH' region motif is present at residues 12–22 (PYANGPLHFGH). 4 residues coordinate Zn(2+): C144, C147, C157, and C160. Residues 330–334 (QFSKS) carry the 'KMSKS' region motif. K333 is a binding site for ATP.

It belongs to the class-I aminoacyl-tRNA synthetase family. MetG type 1 subfamily. Monomer. Zn(2+) serves as cofactor.

It is found in the cytoplasm. It carries out the reaction tRNA(Met) + L-methionine + ATP = L-methionyl-tRNA(Met) + AMP + diphosphate. Functionally, is required not only for elongation of protein synthesis but also for the initiation of all mRNA translation through initiator tRNA(fMet) aminoacylation. This Chlamydia abortus (strain DSM 27085 / S26/3) (Chlamydophila abortus) protein is Methionine--tRNA ligase.